We begin with the raw amino-acid sequence, 427 residues long: Intermediate conductance calcium-activated potassium channel protein 4 (427 aa).

A helical transmembrane segment spans residues 29–49 (ALVLAGTGIGLMVLHAEMLWF). A helical transmembrane segment spans residues 59–79 (FLVKCTISISTFLLLCLIVAF). Residues 108 to 128 (IVLELVVCGLHPAPVRGPPCV) form a helical membrane-spanning segment. Residues 143-163 (GFLGQGEALLSLAMLLRLYLV) form a helical membrane-spanning segment. The chain crosses the membrane as a helical span at residues 207 to 227 (LLLGLTLGLWLTTAWVLSVAE). Positions 241-261 (LWLIPITFLTIGYGDVVPGTM) form an intramembrane region, pore-forming. Residues 265–285 (IVCLCTGVMGVCCTALLVAVV) form a helical membrane-spanning segment. A calmodulin-binding region spans residues 286–347 (ARKLEFNKAE…RRHQRKLLAA (62 aa)). Histidine 358 carries the phosphohistidine modification.

It belongs to the potassium channel KCNN family. KCa3.1/KCNN4 subfamily. In terms of assembly, homodimer. Homotetramer. Heterotetramer of potassium channel proteins. Interacts with MTMR6; this interaction leads to selective dephosphorylation of PI(3)P in a lipid microdomain adjacent to KCNN4, resulting in a decrease of intermediate conductance calcium-activated potassium channel activity. Interacts (via the C-tail domain) with CALM1; the calmodulin binding is constitutive, does not require calcium and mediates calcium-dependent gating and four calmodulin molecules bind to one channel tetramer. In terms of processing, phosphorylation at His-358 by NDKB activates the intermediate conductance calcium-activated potassium channel activity, and conversely it's dephosphorylation by PHPT1 inhibits this activity. In terms of tissue distribution, widely expressed in non-excitable tissues.

The protein localises to the cell membrane. It localises to the cell projection. The protein resides in the ruffle membrane. The catalysed reaction is K(+)(in) = K(+)(out). With respect to regulation, the channel is inhibited by clotrimazole and charybdotoxin but is insensitive to apamin. Its function is as follows. Intermediate conductance calcium-activated potassium channel that mediates the voltage-independent transmembrane transfer of potassium across the cell membrane through a constitutive interaction with calmodulin which binds the intracellular calcium allowing its opening. The current is characterized by a voltage-independent activation, an intracellular calcium concentration increase-dependent activation and a single-channel conductance of about 25 picosiemens. Also presents an inwardly rectifying current, thus reducing its already small outward conductance of potassium ions, which is particularly the case when the membrane potential displays positive values, above + 20 mV. Controls calcium influx during vascular contractility by being responsible of membrane hyperpolarization induced by vasoactive factors in proliferative vascular smooth muscle cell types. Following calcium influx, the consecutive activation of KCNN4 channel leads to a hyperpolarization of the cell membrane potential and hence an increase of the electrical driving force for further calcium influx promoting sustained calcium entry in response to stimulation with chemotactic peptides. Required for maximal calcium influx and proliferation during the reactivation of naive T-cells. Plays a role in the late stages of EGF-induced macropinocytosis through activation by PI(3)P. The polypeptide is Intermediate conductance calcium-activated potassium channel protein 4 (Homo sapiens (Human)).